Here is a 374-residue protein sequence, read N- to C-terminus: Pectate lyase 2 (374 aa).

A signal peptide spans 1–22 (MKYLLPTAATGLLLLAAQPAVA). Residues cysteine 93 and cysteine 176 are joined by a disulfide bond. Residues aspartate 150, aspartate 152, glutamate 187, and aspartate 191 each coordinate Ca(2+). Residue arginine 239 is part of the active site. Cysteine 350 and cysteine 373 are disulfide-bonded.

It belongs to the polysaccharide lyase 1 family. PLADES subfamily. It depends on Ca(2+) as a cofactor.

The protein resides in the secreted. It catalyses the reaction Eliminative cleavage of (1-&gt;4)-alpha-D-galacturonan to give oligosaccharides with 4-deoxy-alpha-D-galact-4-enuronosyl groups at their non-reducing ends.. The protein operates within glycan metabolism; pectin degradation; 2-dehydro-3-deoxy-D-gluconate from pectin: step 2/5. In terms of biological role, involved in maceration and soft-rotting of plant tissue. In Pectobacterium atrosepticum (strain SCRI 1043 / ATCC BAA-672) (Erwinia carotovora subsp. atroseptica), this protein is Pectate lyase 2 (pel2).